The sequence spans 269 residues: Probable 3-deoxy-manno-octulosonic acid transferase (269 aa).

It is found in the cytoplasm. It catalyses the reaction an alpha-Kdo-(2-&gt;4)-alpha-Kdo-(2-&gt;6)-lipid IVA + CMP-3-deoxy-beta-D-manno-octulosonate = an alpha-Kdo-(2-&gt;4)-alpha-Kdo-(2-&gt;4)-alpha-Kdo-(2-&gt;6)-lipid IVA + CMP + H(+). Its pathway is bacterial outer membrane biogenesis; LPS core biosynthesis. Its function is as follows. Involved in the biosynthesis of the core oligosaccharide region of lipopolysaccharide (LPS). Required for the addition of 3-deoxy-D-manno-oct-2-ulosonic acid III (KdoIII) to the KdoII residue of the inner lipopolysaccharide core. The protein is Probable 3-deoxy-manno-octulosonic acid transferase of Salmonella typhimurium (strain LT2 / SGSC1412 / ATCC 700720).